The following is a 333-amino-acid chain: Autoinducer 2 import system permease protein LsrD (333 aa).

The next 10 helical transmembrane spans lie at tyrosine 7 to alanine 27, isoleucine 45 to isoleucine 65, threonine 70 to alanine 90, alanine 91 to leucine 111, leucine 118 to isoleucine 138, leucine 162 to phenylalanine 182, threonine 212 to valine 232, serine 240 to asparagine 260, isoleucine 261 to leucine 281, and alanine 288 to valine 308.

This sequence belongs to the binding-protein-dependent transport system permease family. AraH/RbsC subfamily. In terms of assembly, the complex is composed of two ATP-binding proteins (LsrA), two transmembrane proteins (LsrC and LsrD) and a solute-binding protein (LsrB).

It is found in the cell inner membrane. Functionally, part of the ABC transporter complex LsrABCD involved in autoinducer 2 (AI-2) import. Probably responsible for the translocation of the substrate across the membrane. This is Autoinducer 2 import system permease protein LsrD (lsrD) from Photorhabdus laumondii subsp. laumondii (strain DSM 15139 / CIP 105565 / TT01) (Photorhabdus luminescens subsp. laumondii).